The chain runs to 66 residues: MKEKIHPEYKEAKVVCACGETFVTRSTKPVIKVDICSKCHPFYTGKQKIVDTEGRVEKFMKKYSKK.

Cysteine 16, cysteine 18, cysteine 36, and cysteine 39 together coordinate Zn(2+).

It belongs to the bacterial ribosomal protein bL31 family. Type A subfamily. As to quaternary structure, part of the 50S ribosomal subunit. Zn(2+) serves as cofactor.

Its function is as follows. Binds the 23S rRNA. This Thermodesulfovibrio yellowstonii (strain ATCC 51303 / DSM 11347 / YP87) protein is Large ribosomal subunit protein bL31.